A 355-amino-acid polypeptide reads, in one-letter code: Protein-tyrosine sulfotransferase 1 (355 aa).

At 1–8 (MIGKLKQN) the chain is on the cytoplasmic side. The chain crosses the membrane as a helical; Signal-anchor for type II membrane protein span at residues 9 to 25 (LLVACLVISSVTVFYLC). The Lumenal portion of the chain corresponds to 26–355 (RHAMDCHHRI…QKSPEKPNPS (330 aa)). An N-linked (GlcNAc...) asparagine glycan is attached at Asn55. A 3'-phosphoadenylyl sulfate-binding site is contributed by 76-80 (RSGTT). The cysteines at positions 94 and 154 are disulfide-linked. Catalysis depends on Glu97, which acts as the Proton donor/acceptor. Positions 99-103 (RVIPR) are interaction with peptide substrate. 3'-phosphoadenylyl sulfate contacts are provided by Arg181, Ser189, and Arg193. Cys223 and Cys230 are oxidised to a cystine. Residues Tyr235, 282–291 (STDQVIKPVN), and Lys297 each bind 3'-phosphoadenylyl sulfate. The disordered stretch occupies residues 325 to 355 (HANPPNYGRPDPLVLDNTRRLQKSPEKPNPS). Residues 341-355 (NTRRLQKSPEKPNPS) show a composition bias toward basic and acidic residues.

Belongs to the protein sulfotransferase family.

The protein localises to the golgi apparatus membrane. The enzyme catalyses L-tyrosyl-[protein] + 3'-phosphoadenylyl sulfate = O-sulfo-L-tyrosine-[protein] + adenosine 3',5'-bisphosphate + H(+). In terms of biological role, catalyzes the O-sulfation of tyrosine residues within acidic motifs of polypeptides, using 3'-phosphoadenylyl sulfate (PAPS) as cosubstrate. The protein is Protein-tyrosine sulfotransferase 1 (tpst1) of Danio rerio (Zebrafish).